Reading from the N-terminus, the 379-residue chain is Small ribosomal subunit protein uS2cy (379 aa).

Residues Met1–Ser94 are N-terminal extension. The disordered stretch occupies residues Asn83 to Val106.

This sequence belongs to the universal ribosomal protein uS2 family.

The protein localises to the plastid. It localises to the chloroplast. The protein is Small ribosomal subunit protein uS2cy (rps2-2) of Tetradesmus obliquus (Green alga).